The following is a 514-amino-acid chain: Glucose-6-phosphate 1-dehydrogenase 2 (514 aa).

NADP(+) contacts are provided by Arg69 and Lys176. Substrate is bound by residues His206, Lys210, Glu244, and Asp263. Residue His268 is the Proton acceptor of the active site. Lys366 lines the substrate pocket.

Belongs to the glucose-6-phosphate dehydrogenase family.

The catalysed reaction is D-glucose 6-phosphate + NADP(+) = 6-phospho-D-glucono-1,5-lactone + NADPH + H(+). It functions in the pathway carbohydrate degradation; pentose phosphate pathway; D-ribulose 5-phosphate from D-glucose 6-phosphate (oxidative stage): step 1/3. In terms of biological role, catalyzes the oxidation of glucose 6-phosphate to 6-phosphogluconolactone. This is Glucose-6-phosphate 1-dehydrogenase 2 from Mycobacterium bovis (strain ATCC BAA-935 / AF2122/97).